A 120-amino-acid polypeptide reads, in one-letter code: Large ribosomal subunit protein uL18 (120 aa).

This sequence belongs to the universal ribosomal protein uL18 family. As to quaternary structure, part of the 50S ribosomal subunit; part of the 5S rRNA/L5/L18/L25 subcomplex. Contacts the 5S and 23S rRNAs.

This is one of the proteins that bind and probably mediate the attachment of the 5S RNA into the large ribosomal subunit, where it forms part of the central protuberance. The chain is Large ribosomal subunit protein uL18 from Methylobacterium nodulans (strain LMG 21967 / CNCM I-2342 / ORS 2060).